Here is a 398-residue protein sequence, read N- to C-terminus: Cytochrome P450 165B3 (398 aa).

Heme is bound at residue Cys347.

The protein belongs to the cytochrome P450 family. Requires heme as cofactor.

It participates in antibiotic biosynthesis; vancomycin biosynthesis. In terms of biological role, involved in the coupling of aromatic side chains of the heptapeptide of vancomycin. The sequence is that of Cytochrome P450 165B3 (cyp165B3) from Amycolatopsis orientalis (Nocardia orientalis).